The chain runs to 180 residues: ATP-dependent protease subunit HslV (180 aa).

The active site involves Thr-9. Residues Ala-164, Cys-167, and Thr-170 each contribute to the Na(+) site.

This sequence belongs to the peptidase T1B family. HslV subfamily. As to quaternary structure, a double ring-shaped homohexamer of HslV is capped on each side by a ring-shaped HslU homohexamer. The assembly of the HslU/HslV complex is dependent on binding of ATP.

The protein resides in the cytoplasm. The enzyme catalyses ATP-dependent cleavage of peptide bonds with broad specificity.. Its activity is regulated as follows. Allosterically activated by HslU binding. In terms of biological role, protease subunit of a proteasome-like degradation complex believed to be a general protein degrading machinery. The chain is ATP-dependent protease subunit HslV from Leptospira interrogans serogroup Icterohaemorrhagiae serovar Lai (strain 56601).